A 276-amino-acid polypeptide reads, in one-letter code: Ribosomal RNA large subunit methyltransferase E (276 aa).

S-adenosyl-L-methionine contacts are provided by Gly-52, Phe-54, Asp-72, Asp-90, and Asp-114. The Proton acceptor role is filled by Lys-154. Residues 203–249 are compositionally biased toward low complexity; it reads RAAPTANATPTPTSTSTSTPTSTSTPTSTSTSTPAPTLTQTQTQTPK. The segment at 203-276 is disordered; that stretch reads RAAPTANATP…AKTGASRRTR (74 aa). The segment covering 265 to 276 has biased composition (basic residues); the sequence is AKAKTGASRRTR.

It belongs to the class I-like SAM-binding methyltransferase superfamily. RNA methyltransferase RlmE family.

The protein resides in the cytoplasm. The catalysed reaction is uridine(2552) in 23S rRNA + S-adenosyl-L-methionine = 2'-O-methyluridine(2552) in 23S rRNA + S-adenosyl-L-homocysteine + H(+). Its function is as follows. Specifically methylates the uridine in position 2552 of 23S rRNA at the 2'-O position of the ribose in the fully assembled 50S ribosomal subunit. The protein is Ribosomal RNA large subunit methyltransferase E of Anaeromyxobacter sp. (strain Fw109-5).